We begin with the raw amino-acid sequence, 207 residues long: Uridine kinase (207 aa).

11-18 (GGSGSGKT) serves as a coordination point for ATP.

It belongs to the uridine kinase family.

The protein localises to the cytoplasm. The catalysed reaction is uridine + ATP = UMP + ADP + H(+). The enzyme catalyses cytidine + ATP = CMP + ADP + H(+). It functions in the pathway pyrimidine metabolism; CTP biosynthesis via salvage pathway; CTP from cytidine: step 1/3. Its pathway is pyrimidine metabolism; UMP biosynthesis via salvage pathway; UMP from uridine: step 1/1. The chain is Uridine kinase from Staphylococcus epidermidis (strain ATCC 35984 / DSM 28319 / BCRC 17069 / CCUG 31568 / BM 3577 / RP62A).